Here is a 455-residue protein sequence, read N- to C-terminus: Bifunctional protein GlmU (455 aa).

The segment at 1–227 (MDSLSIVILA…SWEAAGVNNK (227 aa)) is pyrophosphorylase. UDP-N-acetyl-alpha-D-glucosamine-binding positions include 9–12 (LAAG), Lys23, Gln74, 79–80 (GT), 101–103 (YGD), Gly137, Glu152, Asn167, and Asn225. Asp103 serves as a coordination point for Mg(2+). Residue Asn225 coordinates Mg(2+). The tract at residues 228–248 (VQLAELERILQANQARALLEA) is linker. The tract at residues 249-455 (GVTLADPARI…GWKRPQKKSG (207 aa)) is N-acetyltransferase. Residues Arg331 and Lys349 each contribute to the UDP-N-acetyl-alpha-D-glucosamine site. Catalysis depends on His361, which acts as the Proton acceptor. The UDP-N-acetyl-alpha-D-glucosamine site is built by Tyr364 and Asn375. Acetyl-CoA-binding positions include Ala378, 384 to 385 (NY), Ser403, Ala421, and Arg438.

It in the N-terminal section; belongs to the N-acetylglucosamine-1-phosphate uridyltransferase family. In the C-terminal section; belongs to the transferase hexapeptide repeat family. As to quaternary structure, homotrimer. Requires Mg(2+) as cofactor.

The protein localises to the cytoplasm. The catalysed reaction is alpha-D-glucosamine 1-phosphate + acetyl-CoA = N-acetyl-alpha-D-glucosamine 1-phosphate + CoA + H(+). It carries out the reaction N-acetyl-alpha-D-glucosamine 1-phosphate + UTP + H(+) = UDP-N-acetyl-alpha-D-glucosamine + diphosphate. It participates in nucleotide-sugar biosynthesis; UDP-N-acetyl-alpha-D-glucosamine biosynthesis; N-acetyl-alpha-D-glucosamine 1-phosphate from alpha-D-glucosamine 6-phosphate (route II): step 2/2. It functions in the pathway nucleotide-sugar biosynthesis; UDP-N-acetyl-alpha-D-glucosamine biosynthesis; UDP-N-acetyl-alpha-D-glucosamine from N-acetyl-alpha-D-glucosamine 1-phosphate: step 1/1. The protein operates within bacterial outer membrane biogenesis; LPS lipid A biosynthesis. Catalyzes the last two sequential reactions in the de novo biosynthetic pathway for UDP-N-acetylglucosamine (UDP-GlcNAc). The C-terminal domain catalyzes the transfer of acetyl group from acetyl coenzyme A to glucosamine-1-phosphate (GlcN-1-P) to produce N-acetylglucosamine-1-phosphate (GlcNAc-1-P), which is converted into UDP-GlcNAc by the transfer of uridine 5-monophosphate (from uridine 5-triphosphate), a reaction catalyzed by the N-terminal domain. The protein is Bifunctional protein GlmU of Chromobacterium violaceum (strain ATCC 12472 / DSM 30191 / JCM 1249 / CCUG 213 / NBRC 12614 / NCIMB 9131 / NCTC 9757 / MK).